We begin with the raw amino-acid sequence, 65 residues long: Large ribosomal subunit protein bL35 (65 aa).

This sequence belongs to the bacterial ribosomal protein bL35 family.

The polypeptide is Large ribosomal subunit protein bL35 (Nostoc sp. (strain PCC 7120 / SAG 25.82 / UTEX 2576)).